Here is a 723-residue protein sequence, read N- to C-terminus: Calpastatin (723 aa).

2 disordered regions span residues 1–402 (MNPT…PGRC) and 422–509 (STHS…LPPL). Basic residues predominate over residues 21–30 (PNKKRHKKQA). Lys-32 participates in a covalent cross-link: Glycyl lysine isopeptide (Lys-Gly) (interchain with G-Cter in SUMO2). A compositionally biased stretch (basic and acidic residues) spans 46–84 (VVHEKKTQEVKPKEHTEPKSQPKHPSDTRSKHAPKEKAV). N6-acetyllysine is present on Lys-50. Low complexity-rich tracts occupy residues 85-94 (SKSSEQPPSE) and 113-125 (SAVPAVAAAASAE). A Phosphoserine modification is found at Ser-87. Thr-137 is subject to Phosphothreonine. A compositionally biased stretch (acidic residues) spans 157 to 173 (TALDDLIDTLGEPEETK). The stretch at 171 to 224 (ETKEDTTTYTGPEVSDPMSSTYIEELGKREVTLPPKYRELLNKEEGIAGPPPDS) is one Inhibitory domain 1 repeat. Basic and acidic residues predominate over residues 195-216 (ELGKREVTLPPKYRELLNKEEG). 2 positions are modified to phosphoserine: Ser-224 and Ser-245. Composition is skewed to basic and acidic residues over residues 249–263 (DAKKTEKEKSTEEAL) and 306–367 (PRPE…KPLS). The stretch at 307 to 359 (RPELDPSSIKEVDEAKAKEEKVKKCGEDEERVPSEYRLKPATDKDGKPLLPEA) is one Inhibitory domain 2 repeat. Phosphoserine occurs at positions 367, 369, and 376. The segment covering 378-396 (DFDRSKCKEKQSKPTEKNR) has biased composition (basic and acidic residues). At Ser-443 the chain carries Phosphoserine. Residues 445 to 504 (GKKEADPEDGKPVEDKVKEKAKEEDREKLGEREETIPPDYRLEEAKDKDGKPLPPKEVKE) show a composition bias toward basic and acidic residues. An Inhibitory domain 3 repeat occupies 449–502 (ADPEDGKPVEDKVKEKAKEEDREKLGEREETIPPDYRLEEAKDKDGKPLPPKEV). Ser-519 and Ser-530 each carry phosphoserine. The disordered stretch occupies residues 547-723 (SQTPAPTTQA…KPKADGKSTS (177 aa)). The span at 548–560 (QTPAPTTQAAGPP) shows a compositional bias: low complexity. Basic and acidic residues predominate over residues 562–571 (DSARDNKELD). Residues Ser-578 and Ser-580 each carry the phosphoserine modification. The stretch at 586-642 (PDPDEHKPVEDKVKEKAKAEHRDKLGERDDTIPPKYQHLLDDNKEGTPGKPKRSESP) is one Inhibitory domain 4 repeat. Residues 586–643 (PDPDEHKPVEDKVKEKAKAEHRDKLGERDDTIPPKYQHLLDDNKEGTPGKPKRSESPR) are compositionally biased toward basic and acidic residues. Residues 653–670 (NLQVPRTPLTPSQGTWTA) show a composition bias toward polar residues. The span at 672–690 (PQLQKPQQTQQRTKTRSLL) shows a compositional bias: low complexity. The segment covering 701-723 (KAKDSTKAKEETSKPKADGKSTS) has biased composition (basic and acidic residues).

The protein belongs to the protease inhibitor I27 (calpastatin) family.

In terms of biological role, specific inhibition of calpain (calcium-dependent cysteine protease). Plays a key role in postmortem tenderization of meat and have been proposed to be involved in muscle protein degradation in living tissue. The polypeptide is Calpastatin (CAST) (Ovis aries (Sheep)).